We begin with the raw amino-acid sequence, 341 residues long: Malate dehydrogenase, mitochondrial (341 aa).

Residues 35–41 (GAGGGIG) and D61 contribute to the NAD(+) site. The substrate site is built by R109 and R115. N122 contributes to the NAD(+) binding site. The substrate site is built by N147 and R181. H205 functions as the Proton acceptor in the catalytic mechanism. M254 lines the NAD(+) pocket.

The protein belongs to the LDH/MDH superfamily. MDH type 1 family. As to quaternary structure, homodimer.

It localises to the mitochondrion matrix. The catalysed reaction is (S)-malate + NAD(+) = oxaloacetate + NADH + H(+). In Schizosaccharomyces pombe (strain 972 / ATCC 24843) (Fission yeast), this protein is Malate dehydrogenase, mitochondrial (MDH1).